A 230-amino-acid polypeptide reads, in one-letter code: Thiamine-triphosphatase (230 aa).

The residue at position 2 (Ala-2) is an N-acetylalanine. A CYTH domain is found at Leu-5 to Phe-201. Mg(2+) contacts are provided by Glu-7 and Glu-9. The substrate site is built by Lys-11, Arg-55, Arg-57, Lys-65, and Arg-125. Asp-145, Glu-157, and Glu-159 together coordinate Mg(2+). Substrate is bound at residue Glu-157. Substrate is bound at residue Lys-193.

The protein belongs to the ThTPase family. In terms of assembly, monomer. Mg(2+) is required as a cofactor. Widely expressed but at a low level.

The protein localises to the cytoplasm. The enzyme catalyses thiamine triphosphate + H2O = thiamine diphosphate + phosphate + H(+). Hydrolase highly specific for thiamine triphosphate (ThTP). This is Thiamine-triphosphatase (THTPA) from Homo sapiens (Human).